Consider the following 672-residue polypeptide: Poly-beta-1,6-N-acetyl-D-glucosamine N-deacetylase (672 aa).

Positions 1–20 (MLRNGNKYLLMLVSIIMLTA) are cleaved as a signal peptide. Residue cysteine 21 is the site of N-palmitoyl cysteine attachment. The S-diacylglycerol cysteine moiety is linked to residue cysteine 21. Residues 107 to 349 (KAVVLTFDDG…IQRVKDMQIS (243 aa)) form the NodB homology domain.

Belongs to the polysaccharide deacetylase family.

Its subcellular location is the cell outer membrane. Functionally, catalyzes the N-deacetylation of poly-beta-1,6-N-acetyl-D-glucosamine (PGA), a biofilm adhesin polysaccharide. N-deacetylation promotes PGA export through the PgaA porin. The chain is Poly-beta-1,6-N-acetyl-D-glucosamine N-deacetylase (pgaB) from Escherichia coli (strain K12).